A 206-amino-acid chain; its full sequence is MSFTGERKGRLIVFEGIDGTGKSTHIGHLRKYLEEKELEVVQSFEPTRGRWGRMLRDSAVTGRLSVEEEVALFLKDRREHVKMLIAPALARGAWVLLDRYYLSMMAYQGARGIDPEVIRAANEEFAPVPDAVVWLDIPVSVALERIGNRGERDAFETEAGLAACRSVFASVHAPWMLRIDADAGKEEVAARVRKALSMRFPDVIGA.

16-23 (GIDGTGKS) is an ATP binding site.

The protein belongs to the thymidylate kinase family.

It carries out the reaction dTMP + ATP = dTDP + ADP. Its function is as follows. Phosphorylation of dTMP to form dTDP in both de novo and salvage pathways of dTTP synthesis. In Akkermansia muciniphila (strain ATCC BAA-835 / DSM 22959 / JCM 33894 / BCRC 81048 / CCUG 64013 / CIP 107961 / Muc), this protein is Thymidylate kinase.